A 488-amino-acid chain; its full sequence is Histone deacetylase 2 (488 aa).

The histone deacetylase stretch occupies residues 9 to 322 (KKKVCYYYDG…WTYETAVALD (314 aa)). Positions 28 and 32 each coordinate 1D-myo-inositol 1,4,5,6-tetrakisphosphate. The active site involves histidine 142. Residues aspartate 177, histidine 179, and aspartate 265 each contribute to the Zn(2+) site. Arginine 271 is a 1D-myo-inositol 1,4,5,6-tetrakisphosphate binding site. The segment at 389 to 488 (AVHEDSGDED…GAKSEQLSNP (100 aa)) is disordered. The span at 402 to 417 (PDKRISIRASDKRIAC) shows a compositional bias: basic and acidic residues. Positions 418–428 (DEEFSDSEDEG) are enriched in acidic residues. The span at 429–481 (EGGRRNVADHKKGAKKARIEEDKKETEDKKADVKEEDKSKDNSGEKTDTKGAK) shows a compositional bias: basic and acidic residues.

Belongs to the histone deacetylase family. HD type 1 subfamily. Zn(2+) is required as a cofactor.

It localises to the nucleus. Its subcellular location is the cytoplasm. The enzyme catalyses N(6)-acetyl-L-lysyl-[histone] + H2O = L-lysyl-[histone] + acetate. It carries out the reaction N(6)-acetyl-L-lysyl-[protein] + H2O = L-lysyl-[protein] + acetate. It catalyses the reaction N(6)-(2E)-butenoyl-L-lysyl-[protein] + H2O = (2E)-2-butenoate + L-lysyl-[protein]. The catalysed reaction is N(6)-(2-hydroxyisobutanoyl)-L-lysyl-[protein] + H2O = 2-hydroxy-2-methylpropanoate + L-lysyl-[protein]. The enzyme catalyses N(6)-[(S)-lactoyl]-L-lysyl-[protein] + H2O = (S)-lactate + L-lysyl-[protein]. With respect to regulation, inositol tetraphosphate (1D-myo-inositol 1,4,5,6-tetrakisphosphate) may act as an intermolecular glue between HDAC2 and N-Cor repressor complex components. Functionally, histone deacetylase that catalyzes the deacetylation of lysine residues on the N-terminal part of the core histones (H2A, H2B, H3 and H4). Histone deacetylation gives a tag for epigenetic repression and plays an important role in transcriptional regulation, cell cycle progression and developmental events. Histone deacetylases act via the formation of large multiprotein complexes. Also deacetylates non-histone proteins. In addition to protein deacetylase activity, also acts as a protein-lysine deacylase by recognizing other acyl groups: catalyzes removal of (2E)-butenoyl (crotonyl), lactoyl (lactyl) and 2-hydroxyisobutanoyl (2-hydroxyisobutyryl) acyl groups from lysine residues, leading to protein decrotonylation, delactylation and de-2-hydroxyisobutyrylation, respectively. In Gallus gallus (Chicken), this protein is Histone deacetylase 2 (HDAC2).